The sequence spans 737 residues: Propionyl-CoA carboxylase alpha chain, mitochondrial (737 aa).

The transit peptide at 1 to 61 (MAGLWVRTVA…QCLVVSRSLS (61 aa)) directs the protein to the mitochondrion. Residues 71 to 518 (TFDKILIANR…STKFLSDVYP (448 aa)) enclose the Biotin carboxylation domain. Lys-74 carries the post-translational modification N6-acetyllysine; alternate. Lys-74 is subject to N6-succinyllysine; alternate. Lys-128 bears the N6-succinyllysine mark. Lys-159 bears the N6-acetyllysine; alternate mark. Lys-159 is subject to N6-succinyllysine; alternate. Lys-163 is modified (N6-acetyllysine). Lys-186 provides a ligand contact to ATP. Positions 190–387 (KLLAKRAKVN…LVQEMILVAK (198 aa)) constitute an ATP-grasp domain. Lys-197 bears the N6-succinyllysine mark. N6-acetyllysine; alternate is present on Lys-209. Lys-209 carries the N6-succinyllysine; alternate modification. ATP-binding positions include 218 to 279 (AREI…PRHI), Glu-270, and Asn-305. Ser-261 is subject to Phosphoserine. Lys-271 bears the N6-succinyllysine mark. N6-acetyllysine; alternate is present on Lys-337. An N6-succinyllysine; alternate modification is found at Lys-337. Mg(2+)-binding residues include Glu-345, Glu-358, and Asn-360. Glu-345, Glu-358, and Asn-360 together coordinate Mn(2+). Arg-362 is a catalytic residue. N6-succinyllysine occurs at positions 394 and 416. Position 418 (Phe-418) interacts with biotin. Lys-505 carries the post-translational modification N6-acetyllysine. An N6-succinyllysine mark is found at Lys-511, Lys-522, Lys-567, and Lys-657. A Biotinyl-binding domain is found at 658-737 (FMLEKVPKDT…GEGDLLVELE (80 aa)). Lys-703 carries the N6-biotinyllysine; by HLCS modification.

In terms of assembly, the holoenzyme is a dodecamer composed of 6 PCCA/alpha subunits and 6 PCCB/beta subunits. Interacts (via the biotin carboxylation domain) with SIRT4. Interacts with SIRT3 and SIRT5. Biotin serves as cofactor. The cofactor is Mg(2+). Mn(2+) is required as a cofactor. In terms of processing, acetylated. The biotin cofactor is covalently attached to the C-terminal biotinyl-binding domain and is required for the catalytic activity. Biotinylation is catalyzed by HLCS.

The protein resides in the mitochondrion matrix. It catalyses the reaction propanoyl-CoA + hydrogencarbonate + ATP = (S)-methylmalonyl-CoA + ADP + phosphate + H(+). The enzyme catalyses butanoyl-CoA + hydrogencarbonate + ATP = (2S)-ethylmalonyl-CoA + ADP + phosphate + H(+). It functions in the pathway metabolic intermediate metabolism; propanoyl-CoA degradation; succinyl-CoA from propanoyl-CoA: step 1/3. Its function is as follows. This is one of the 2 subunits of the biotin-dependent propionyl-CoA carboxylase (PCC), a mitochondrial enzyme involved in the catabolism of odd chain fatty acids, branched-chain amino acids isoleucine, threonine, methionine, and valine and other metabolites. Propionyl-CoA carboxylase catalyzes the carboxylation of propionyl-CoA/propanoyl-CoA to D-methylmalonyl-CoA/(S)-methylmalonyl-CoA. Within the holoenzyme, the alpha subunit catalyzes the ATP-dependent carboxylation of the biotin carried by the biotin carboxyl carrier (BCC) domain, while the beta subunit then transfers the carboxyl group from carboxylated biotin to propionyl-CoA. Propionyl-CoA carboxylase also significantly acts on butyryl-CoA/butanoyl-CoA, which is converted to ethylmalonyl-CoA/(2S)-ethylmalonyl-CoA. Other alternative minor substrates include (2E)-butenoyl-CoA/crotonoyl-CoA. The polypeptide is Propionyl-CoA carboxylase alpha chain, mitochondrial (Rattus norvegicus (Rat)).